Here is a 311-residue protein sequence, read N- to C-terminus: Putative S-adenosyl-L-methionine-dependent methyltransferase MMAR_0358 (311 aa).

S-adenosyl-L-methionine-binding positions include Asp132 and 161 to 162; that span reads DL.

This sequence belongs to the UPF0677 family.

In terms of biological role, exhibits S-adenosyl-L-methionine-dependent methyltransferase activity. The sequence is that of Putative S-adenosyl-L-methionine-dependent methyltransferase MMAR_0358 from Mycobacterium marinum (strain ATCC BAA-535 / M).